Here is a 476-residue protein sequence, read N- to C-terminus: 3-isopropylmalate dehydratase large subunit (476 aa).

[4Fe-4S] cluster is bound by residues C347, C407, and C410. The segment at 418–442 is disordered; that stretch reads LAPGERSASTSNRNFEGRQGKGGRT.

The protein belongs to the aconitase/IPM isomerase family. LeuC type 1 subfamily. As to quaternary structure, heterodimer of LeuC and LeuD. It depends on [4Fe-4S] cluster as a cofactor.

It carries out the reaction (2R,3S)-3-isopropylmalate = (2S)-2-isopropylmalate. Its pathway is amino-acid biosynthesis; L-leucine biosynthesis; L-leucine from 3-methyl-2-oxobutanoate: step 2/4. In terms of biological role, catalyzes the isomerization between 2-isopropylmalate and 3-isopropylmalate, via the formation of 2-isopropylmaleate. The polypeptide is 3-isopropylmalate dehydratase large subunit (Streptomyces coelicolor (strain ATCC BAA-471 / A3(2) / M145)).